The chain runs to 408 residues: MSPCENDPPINWKRNLIVAWLGCFLTGAAFSLVMPFLPLYVEQLGVTGHSALNMWSGIVFSITFLFSAIASPFWGGLADRKGRKLMLLRSALGMGIVMVLMGLAQNIWQFLILRALLGLLGGFVPNANALIATQVPRNKSGWALGTLSTGGVSGALLGPMAGGLLADSYGLRPVFFITASVLILCFFVTLFCIREKFQPVSKKEMLHMREVVTSLKNPKLVLSLFVTTLIIQVATGSIAPILTLYVRELAGNVSNVAFISGMIASVPGVAALLSAPRLGKLGDRIGPEKILITALIFSVLLLIPMSYVQTPLQLGILRFLLGAADGALLPAVQTLLVYNSSNQIAGRIFSYNQSFRDIGNVTGPLMGAAISANYGFRAVFLVTAGVVLFNAVYSWNSLRRRRIPQISN.

Transmembrane regions (helical) follow at residues 16–36 (LIVA…VMPF), 58–78 (IVFS…GGLA), 92–112 (LGMG…QFLI), 115–135 (ALLG…ATQV), 146–166 (TLST…GLLA), 173–193 (PVFF…LFCI), 224–244 (LFVT…ILTL), 256–276 (VAFI…LSAP), 290–310 (ILIT…YVQT), 319–339 (FLLG…LVYN), and 378–398 (AVFL…WNSL).

The protein belongs to the major facilitator superfamily. DHA1 family. MdtG (TC 2.A.1.2.20) subfamily.

It is found in the cell inner membrane. Functionally, confers resistance to fosfomycin and deoxycholate. The polypeptide is Multidrug resistance protein MdtG (Escherichia coli O81 (strain ED1a)).